The chain runs to 574 residues: 5'-nucleotidase (574 aa).

The N-terminal stretch at 1–26 (MCPRAARAPATLLLALGAVLWPAAGA) is a signal peptide. Residues Asp-36 and His-38 each coordinate Zn(2+). A disulfide bridge links Cys-51 with Cys-57. The N-linked (GlcNAc...) asparagine glycan is linked to Asn-53. Zn(2+) contacts are provided by Asp-85, Asn-117, His-220, and His-243. Residues Asn-311 and Asn-333 are each glycosylated (N-linked (GlcNAc...) asparagine). Disulfide bonds link Cys-353-Cys-358 and Cys-365-Cys-387. Arg-354 is an AMP binding site. IMP is bound at residue Arg-354. The AMP site is built by Asn-390 and Arg-395. IMP-binding residues include Asn-390 and Arg-395. N-linked (GlcNAc...) asparagine glycosylation is present at Asn-403. Phe-417 provides a ligand contact to AMP. Phe-417 is a binding site for IMP. An intrachain disulfide couples Cys-476 to Cys-479. Phe-500 and Asp-506 together coordinate AMP. IMP contacts are provided by Phe-500 and Asp-506. A lipid anchor (GPI-anchor amidated serine) is attached at Ser-549. Positions 550 to 574 (TGSHCHGSFSLIFLSLWAVIFVLYQ) are cleaved as a propeptide — removed in mature form.

Belongs to the 5'-nucleotidase family. As to quaternary structure, homodimer. Zn(2+) is required as a cofactor.

The protein localises to the cell membrane. It carries out the reaction a ribonucleoside 5'-phosphate + H2O = a ribonucleoside + phosphate. The enzyme catalyses a 2'-deoxyribonucleoside 5'-phosphate + H2O = a 2'-deoxyribonucleoside + phosphate. It catalyses the reaction dTMP + H2O = thymidine + phosphate. The catalysed reaction is CMP + H2O = cytidine + phosphate. It carries out the reaction IMP + H2O = inosine + phosphate. The enzyme catalyses AMP + H2O = adenosine + phosphate. It catalyses the reaction GMP + H2O = guanosine + phosphate. The catalysed reaction is UMP + H2O = uridine + phosphate. It carries out the reaction dAMP + H2O = 2'-deoxyadenosine + phosphate. The enzyme catalyses dCMP + H2O = 2'-deoxycytidine + phosphate. Inhibited by adenosine 5'-(alpha,beta-methylene)-diphosphate (AMPCP). Functionally, catalyzes the hydrolysis of nucleotide monophosphates, releasing inorganic phosphate and the corresponding nucleoside, with AMP being the preferred substrate. Shows a preference for ribonucleotide monophosphates over their equivalent deoxyribose forms. Other substrates include IMP, UMP, GMP, CMP, dAMP, dCMP, dTMP, NAD and NMN. The polypeptide is 5'-nucleotidase (NT5E) (Homo sapiens (Human)).